A 337-amino-acid chain; its full sequence is MAVKVGINGFGRIGRIVLRNALQLGNIEVVAINDPFIALDYMVYMFKYDTVHGRYKGTVEVKDGKLVVDGHAITVFAEKNPADIKWGSAGADYIVESTGVFTTVEKASLHLQGGAKKVVISAPSADAPMFVVGVNLDKYDSKYQVISNASCTTNCLAPLAKVIHDKYGIAEGLMTTVHATTATQKTVDGPSHKDWRGGRSVNNNIIPSSTGAAKAVGKVIPSLNGRLTGLAFRVPTLDVSVVDLVVRLEKEASYDEIVATVKEASEGPLKGILGFTDESVVSTDFTGANESSIFDSKAGIAISKSFVKLIAWYDNEWGYSRRVCDLLVYAAKQDGAL.

NAD(+) contacts are provided by residues arginine 12 to isoleucine 13, aspartate 34, and lysine 79. D-glyceraldehyde 3-phosphate is bound by residues serine 150–threonine 152, threonine 181, threonine 210–glycine 211, and arginine 233. Cysteine 151 acts as the Nucleophile in catalysis. NAD(+) is bound at residue asparagine 315.

This sequence belongs to the glyceraldehyde-3-phosphate dehydrogenase family. As to quaternary structure, homotetramer.

It is found in the cytoplasm. It catalyses the reaction D-glyceraldehyde 3-phosphate + phosphate + NAD(+) = (2R)-3-phospho-glyceroyl phosphate + NADH + H(+). It functions in the pathway carbohydrate degradation; glycolysis; pyruvate from D-glyceraldehyde 3-phosphate: step 1/5. The chain is Glyceraldehyde-3-phosphate dehydrogenase (GPD) from Schizophyllum commune (Split gill fungus).